The sequence spans 997 residues: Frequency clock protein (997 aa).

Disordered regions lie at residues 1–153 (MADS…HSSS), 214–311 (FAAS…LLPH), 381–447 (GENP…DLDP), 524–590 (SSDG…SRSP), 665–694 (DLSG…GDEA), 889–908 (EESF…FSDN), and 975–997 (SSVA…VSSS). Polar residues predominate over residues 74–94 (GESNDTGQSDPKSWFDQSNRN). Basic and acidic residues predominate over residues 115–125 (KETDSSNEDSR). Positions 138–152 (DTQTQGFRATVAHSS) are enriched in polar residues. A compositionally biased stretch (basic residues) spans 227–237 (QRRKAGRHGKA). Residues 239–261 (HSSGVSLSKHDSSSSSRSRPVDS) are compositionally biased toward low complexity. Over residues 264–275 (ASMSTGRSSHAA) the composition is skewed to polar residues. A compositionally biased stretch (low complexity) spans 277–294 (SSGPSLGRPSLSSKSTSS). Residues 391–402 (KGATSASNSGGD) show a composition bias toward polar residues. Over residues 410–421 (VTAGGDGNGSGG) the composition is skewed to gly residues. The segment covering 438 to 447 (RPTRPRDLDP) has biased composition (basic and acidic residues). The Nuclear localization signal motif lies at 569 to 573 (RKKQK). The segment covering 675–688 (PTEQMTATGEQEAS) has biased composition (polar residues). Residues 986 to 997 (GYSSSMEDVSSS) show a composition bias toward polar residues.

This sequence belongs to the FRQ family.

Its subcellular location is the nucleus. Its function is as follows. Circadian clock component involved in the generation of biological rhythms, in particular in rhythm stability, period length, and temperature compensation. Behaves as a negative element in circadian transcriptional loop. The protein is Frequency clock protein (FRQ) of Sordaria fimicola.